Here is a 214-residue protein sequence, read N- to C-terminus: Serine protease inhibitor 2.1 (214 aa).

The protein belongs to the serpin family.

The sequence is that of Serine protease inhibitor 2.1 from Rattus norvegicus (Rat).